A 321-amino-acid chain; its full sequence is uncharacterized protein (321 aa).

The signal sequence occupies residues 1–18; the sequence is MKKMKKLLLLLSASFAFS.

This is an uncharacterized protein from Aquifex aeolicus (strain VF5).